The chain runs to 160 residues: Probable chemoreceptor glutamine deamidase CheD 1 (160 aa).

Belongs to the CheD family.

It catalyses the reaction L-glutaminyl-[protein] + H2O = L-glutamyl-[protein] + NH4(+). Its function is as follows. Probably deamidates glutamine residues to glutamate on methyl-accepting chemotaxis receptors (MCPs), playing an important role in chemotaxis. The sequence is that of Probable chemoreceptor glutamine deamidase CheD 1 from Syntrophus aciditrophicus (strain SB).